Here is a 449-residue protein sequence, read N- to C-terminus: Heterogeneous nuclear ribonucleoprotein H (449 aa).

Residue methionine 1 is modified to N-acetylmethionine. Methionine 2 is subject to N-acetylmethionine; in Heterogeneous nuclear ribonucleoprotein H, N-terminally processed. An RRM 1 domain is found at 11–90 (FVVKVRGLPW…RYVEVFKSNN (80 aa)). Serine 23 is modified (phosphoserine). Residue lysine 35 forms a Glycyl lysine isopeptide (Lys-Gly) (interchain with G-Cter in SUMO2) linkage. Phosphoserine is present on residues serine 54 and serine 63. Glycyl lysine isopeptide (Lys-Gly) (interchain with G-Cter in SUMO2) cross-links involve residues lysine 87 and lysine 98. Residues 111 to 188 (GFVRLRGLPF…RYIEIFKSSR (78 aa)) enclose the RRM 2 domain. Dimethylated arginine; alternate is present on arginine 233. At arginine 233 the chain carries Omega-N-methylarginine; alternate. One copy of the 1-1 repeat lies at 234–249 (GAYGGGYGGYDDYNGY). The 2 X 16 AA Gly-rich approximate repeats stretch occupies residues 234–433 (GAYGGGYGGY…YGGQSSMSGY (200 aa)). Tyrosine 246 bears the Phosphotyrosine mark. One can recognise an RRM 3 domain in the interval 289 to 364 (HCVHMRGLPY…RYVELFLNST (76 aa)). Phosphoserine is present on serine 310. 3 tandem repeats follow at residues 354 to 372 (HRYVELFLNSTAGASGGAY), 374 to 392 (HRYVELFLNSTAGASGGAY), and 418 to 433 (GGYGGGYGGQSSMSGY). A 2 X 19 AA perfect repeats region spans residues 354–392 (HRYVELFLNSTAGASGGAYEHRYVELFLNSTAGASGGAY).

As to quaternary structure, part of a ternary complex containing FUBP2, PTBP1, PTBP2 and HNRNPH1. Identified in the spliceosome C complex. Interacts with IGF2BP1. Interacts with CUGBP1; the interaction is RNA-dependent. Interacts with MBNL1; the interaction in RNA-independent.

The protein localises to the nucleus. Its subcellular location is the nucleoplasm. This protein is a component of the heterogeneous nuclear ribonucleoprotein (hnRNP) complexes which provide the substrate for the processing events that pre-mRNAs undergo before becoming functional, translatable mRNAs in the cytoplasm. Mediates pre-mRNA alternative splicing regulation. Inhibits, together with CUGBP1, insulin receptor (IR) pre-mRNA exon 11 inclusion in myoblast. Binds to the IR RNA. Binds poly(RG). This is Heterogeneous nuclear ribonucleoprotein H (Hnrnph1) from Mus musculus (Mouse).